The sequence spans 250 residues: Thioesterase FPSE_09186 (250 aa).

This sequence belongs to the AMT4 thioesterase family.

It participates in secondary metabolite biosynthesis. In terms of biological role, thioesterase; part of the gene cluster that mediates the biosynthesis of the lipopeptides W493 A and B. W493 A and B consist of six amino acid residues D-allo-thr, L-Ala, D-Ala, L-Gln, D-Tyr, and L-Val/L-Ile linked to a 3-hydroxy-4-methyltetradecanoic acid polyketide chain. The biosynthesis starts with formation of the linear polyketide chain by the highly reducing polyketide synthase PKS40. The gene cluster contains a putative acyl-CoA ligase (FPSE_09184) for formation of a CoA thioester polyketide. The thiol bond could be hydrolyzed by the putative thioesterase (FPSE_09186) and then accepted by the first T domain in module 1 of NRPS32. The second T domain is responsible for accepting a threonine, which is adenylated by the A domain and epimerized to the D-allo-threonine formed by the E domain. The five successive modules incorporate Ala, Ala, Gln, Tyr, and Val/Ile into the final product, which is released by cyclization. The sequence is that of Thioesterase FPSE_09186 from Fusarium pseudograminearum (strain CS3096) (Wheat and barley crown-rot fungus).